The sequence spans 324 residues: Ribose-phosphate pyrophosphokinase (324 aa).

ATP is bound by residues Asn-45–Glu-47 and Arg-104–Gln-105. Mg(2+) contacts are provided by His-138 and Asp-178. The active site involves Lys-201. D-ribose 5-phosphate contacts are provided by residues Arg-203, Asp-229, and Asp-233–Thr-237.

This sequence belongs to the ribose-phosphate pyrophosphokinase family. Class I subfamily. As to quaternary structure, homohexamer. The cofactor is Mg(2+).

The protein resides in the cytoplasm. The enzyme catalyses D-ribose 5-phosphate + ATP = 5-phospho-alpha-D-ribose 1-diphosphate + AMP + H(+). It participates in metabolic intermediate biosynthesis; 5-phospho-alpha-D-ribose 1-diphosphate biosynthesis; 5-phospho-alpha-D-ribose 1-diphosphate from D-ribose 5-phosphate (route I): step 1/1. In terms of biological role, involved in the biosynthesis of the central metabolite phospho-alpha-D-ribosyl-1-pyrophosphate (PRPP) via the transfer of pyrophosphoryl group from ATP to 1-hydroxyl of ribose-5-phosphate (Rib-5-P). The protein is Ribose-phosphate pyrophosphokinase of Streptomyces avermitilis (strain ATCC 31267 / DSM 46492 / JCM 5070 / NBRC 14893 / NCIMB 12804 / NRRL 8165 / MA-4680).